Here is a 441-residue protein sequence, read N- to C-terminus: GTPase Der (441 aa).

EngA-type G domains are found at residues 2 to 164 (HKVA…PADD) and 173 to 343 (IRIS…DKWQ). GTP-binding positions include 8–15 (GRPNVGKS), 55–59 (DTGGL), 116–119 (NKID), 179–186 (GRPNVGKS), 226–230 (DTAGI), and 288–291 (NKWD).

This sequence belongs to the TRAFAC class TrmE-Era-EngA-EngB-Septin-like GTPase superfamily. EngA (Der) GTPase family. As to quaternary structure, associates with the 50S ribosomal subunit.

GTPase that plays an essential role in the late steps of ribosome biogenesis. The polypeptide is GTPase Der (Deinococcus deserti (strain DSM 17065 / CIP 109153 / LMG 22923 / VCD115)).